A 355-amino-acid polypeptide reads, in one-letter code: 3'-5' exonuclease (355 aa).

The tract at residues methionine 1–glutamate 119 is disordered. Basic and acidic residues-rich tracts occupy residues lysine 13–proline 29 and lysine 71–proline 91. Phosphoserine occurs at positions 104 and 112. The 3'-5' exonuclease domain maps to threonine 154–glutamine 315. The Mg(2+) site is built by aspartate 164, glutamate 166, and aspartate 302.

Belongs to the WRNexo family.

The protein resides in the nucleus. Functionally, has exonuclease activity on both single-stranded and duplex templates bearing overhangs, but not blunt ended duplex DNA, and cleaves in a 3'-5' direction. Essential for the formation of DNA replication focal centers. Has an important role in maintaining genome stability. This chain is 3'-5' exonuclease, found in Drosophila persimilis (Fruit fly).